Reading from the N-terminus, the 245-residue chain is MAAFTIYPAVDMRGGKCVRLLQGDYNKETVYGDSPVAMAEQFAAQGAEWIHMVDLDGAKEGRRVNDRFVIEAARRLSVHVQVGGGIRTEEDIVHYLENGVARVILGSAAISDPPFVKKMLQKYGRRIVIGIDARDGFVATEGWLATSNVKAEELGRMLAEAGAETFIFTDIATDGTLSGPNIAAAVRLAEATGKEVIASGGVSSLDDLRALCQYAGQGIGGAIVGKALYTNQFTLAEALKVVNER.

D11 serves as the catalytic Proton acceptor. D132 functions as the Proton donor in the catalytic mechanism.

Belongs to the HisA/HisF family.

The protein localises to the cytoplasm. The enzyme catalyses 1-(5-phospho-beta-D-ribosyl)-5-[(5-phospho-beta-D-ribosylamino)methylideneamino]imidazole-4-carboxamide = 5-[(5-phospho-1-deoxy-D-ribulos-1-ylimino)methylamino]-1-(5-phospho-beta-D-ribosyl)imidazole-4-carboxamide. The protein operates within amino-acid biosynthesis; L-histidine biosynthesis; L-histidine from 5-phospho-alpha-D-ribose 1-diphosphate: step 4/9. This Geobacillus kaustophilus (strain HTA426) protein is 1-(5-phosphoribosyl)-5-[(5-phosphoribosylamino)methylideneamino] imidazole-4-carboxamide isomerase.